The sequence spans 261 residues: Uridine-cytidine kinase 2 (261 aa).

The segment at 1-24 (MAGDSEQALPKHSPQNGQPFLIGV) is disordered. 26-34 (GGTASGKSS) contacts ATP. Positions 83, 111, 116, 165, 175, and 183 each coordinate substrate. Position 212 (Asp-212) interacts with ATP. Positions 238–247 (NGYTNGFTSP) are enriched in polar residues. The tract at residues 238 to 261 (NGYTNGFTSPRTRHPSDSNSSRPH) is disordered.

This sequence belongs to the uridine kinase family. Homotetramer.

It catalyses the reaction uridine + ATP = UMP + ADP + H(+). The enzyme catalyses cytidine + ATP = CMP + ADP + H(+). The protein operates within pyrimidine metabolism; CTP biosynthesis via salvage pathway; CTP from cytidine: step 1/3. It participates in pyrimidine metabolism; UMP biosynthesis via salvage pathway; UMP from uridine: step 1/1. In terms of biological role, phosphorylates uridine and cytidine to uridine monophosphate and cytidine monophosphate. Does not phosphorylate deoxyribonucleosides or purine ribonucleosides. Can use ATP or GTP as a phosphate donor. The chain is Uridine-cytidine kinase 2 (uck2) from Xenopus tropicalis (Western clawed frog).